The following is a 226-amino-acid chain: Ribose-5-phosphate isomerase A (226 aa).

Residues 29–32 (TGST), 84–87 (DGAD), and 97–100 (KGGG) each bind substrate. Residue Glu106 is the Proton acceptor of the active site. Substrate is bound at residue Lys124.

This sequence belongs to the ribose 5-phosphate isomerase family. In terms of assembly, homodimer.

The enzyme catalyses aldehydo-D-ribose 5-phosphate = D-ribulose 5-phosphate. The protein operates within carbohydrate degradation; pentose phosphate pathway; D-ribose 5-phosphate from D-ribulose 5-phosphate (non-oxidative stage): step 1/1. In terms of biological role, catalyzes the reversible conversion of ribose-5-phosphate to ribulose 5-phosphate. In Methanothermobacter thermautotrophicus (strain ATCC 29096 / DSM 1053 / JCM 10044 / NBRC 100330 / Delta H) (Methanobacterium thermoautotrophicum), this protein is Ribose-5-phosphate isomerase A.